Reading from the N-terminus, the 307-residue chain is Taste receptor type 2 member 41 (307 aa).

Topologically, residues 1–7 (MQAALTA) are extracellular. A helical membrane pass occupies residues 8–28 (FFMLLFSLLSLLGIAANGFIV). Residues 29-40 (LVLGREWLRYGR) lie on the Cytoplasmic side of the membrane. Residues 41–61 (LLPLDMILISLGASRFCLQLV) traverse the membrane as a helical segment. At 62–88 (GTVHNFYYSAQKVEYSGGLGRQFFHLH) the chain is on the extracellular side. The helical transmembrane segment at 89-109 (WHFLNSATFWFCSWLSVLFCV) threads the bilayer. The Cytoplasmic portion of the chain corresponds to 110 to 129 (KIANITHPTFLWLKWRFPGW). The helical transmembrane segment at 130–150 (VPWLLLGSVLISFIITLLFFW) threads the bilayer. Topologically, residues 151–183 (VNYPAYQEFLIRKFSVNMTYKWNTRIETYYFPS) are extracellular. Asn167 carries N-linked (GlcNAc...) asparagine glycosylation. The chain crosses the membrane as a helical span at residues 184-204 (LKLVIWSIPFSVFLVSIMLLI). Residues 205 to 234 (NSLRRHTQRMQHNGHSLQDPSTQAHTRALK) are Cytoplasmic-facing. Residues 235 to 255 (SLISFLILYALSFLSLIIDAT) traverse the membrane as a helical segment. The Extracellular portion of the chain corresponds to 256–264 (KFISMQNDF). A helical membrane pass occupies residues 265–285 (YWPWQIAVYLCISVHPFILIF). Residues 286–307 (SNLKLRSVFSQLLLLARGFWVA) are Cytoplasmic-facing.

Belongs to the G-protein coupled receptor T2R family.

It is found in the membrane. Its function is as follows. Receptor that may play a role in the perception of bitterness and is gustducin-linked. May play a role in sensing the chemical composition of the gastrointestinal content. The activity of this receptor may stimulate alpha gustducin, mediate PLC-beta-2 activation and lead to the gating of TRPM5. The polypeptide is Taste receptor type 2 member 41 (TAS2R41) (Pan troglodytes (Chimpanzee)).